The chain runs to 157 residues: Capsid protein (157 aa).

N-acetylserine; by host is present on S2.

Belongs to the virgaviridae capsid protein family.

It localises to the virion. Functionally, capsid protein self-assembles to form rod-shaped virions about 18 nm in diameter with a central canal enclosing the viral genomic RNA. The sequence is that of Capsid protein (CP) from Digitalis lanata (Grecian foxglove).